Here is a 187-residue protein sequence, read N- to C-terminus: Translation machinery-associated protein 22 (187 aa).

One can recognise an SUI1 domain in the interval 94 to 165; it reads VTIKRIERNK…EIEEFILEKY (72 aa).

It belongs to the DENR family. As to quaternary structure, interacts with the 40S ribosomal subunit.

The protein resides in the cytoplasm. This Neurospora crassa (strain ATCC 24698 / 74-OR23-1A / CBS 708.71 / DSM 1257 / FGSC 987) protein is Translation machinery-associated protein 22 (tma-22).